Consider the following 344-residue polypeptide: Melanocyte-stimulating hormone receptor (344 aa).

The Extracellular segment spans residues 1–37 (MPMQGAQRKLLGSLNSTPTATSNPGLAANHTGAPCLE). An N-linked (GlcNAc...) asparagine glycan is attached at N29. The helical transmembrane segment at 38–63 (VSIPDGLFLSLGLVSLVENVLVVAAI) threads the bilayer. Residues 64-72 (AKNRNLHSS) lie on the Cytoplasmic side of the membrane. A helical membrane pass occupies residues 73-93 (MYXFICCLALSDLLVSGSNML). At 94–118 (ETAIILLLEAGTLATRASVVQQLHN) the chain is on the extracellular side. A helical transmembrane segment spans residues 119 to 140 (TIDVLTCSSMLCSLCFLGAIAV). The Cytoplasmic portion of the chain corresponds to 141–163 (DRYISIFYALRYHSIMTLPRAQR). The chain crosses the membrane as a helical span at residues 164-183 (AIAAIWVASVLSSTLFITYY). The Extracellular segment spans residues 184–191 (DHAAVLLC). A helical membrane pass occupies residues 192–211 (LVVFFLAMLVLMAVLYVHML). The Cytoplasmic portion of the chain corresponds to 212–240 (ARACQHAQGIIRLHNRQLPAHKGFGLRGA). The helical transmembrane segment at 241 to 266 (ATLTILLGIFFLCWGPFFLHLTLVVF) threads the bilayer. Residues 267–279 (CPQHLTCNCIFKN) lie on the Extracellular side of the membrane. A helical transmembrane segment spans residues 280-300 (FKVFLTLIICNTIIDPLIYAF). The Cytoplasmic segment spans residues 301-344 (RSQELRRTLKEVLLCSSWPGCWAEGGGDSVWPGSCVTLRGPLPP). A lipid anchor (S-palmitoyl cysteine) is attached at C315.

This sequence belongs to the G-protein coupled receptor 1 family. In terms of assembly, interacts with MGRN1, but does not undergo MGRN1-mediated ubiquitination; this interaction competes with GNAS-binding and thus inhibits agonist-induced cAMP production. Interacts with OPN3; the interaction results in a decrease in MC1R-mediated cAMP signaling and ultimately a decrease in melanin production in melanocytes.

Its subcellular location is the cell membrane. Functionally, receptor for MSH (alpha, beta and gamma) and ACTH. The activity of this receptor is mediated by G proteins which activate adenylate cyclase. Mediates melanogenesis, the production of eumelanin (black/brown) and phaeomelanin (red/yellow), via regulation of cAMP signaling in melanocytes. The chain is Melanocyte-stimulating hormone receptor (MC1R) from Callithrix geoffroyi (Geoffroy's marmoset).